We begin with the raw amino-acid sequence, 392 residues long: Phosphoglycerate kinase (392 aa).

Residues 21 to 23, Arg36, 59 to 62, Arg113, and Arg146 each bind substrate; these read DFN and HLGR. Residues Lys197, Glu319, and 345–348 contribute to the ATP site; that span reads GGDT.

It belongs to the phosphoglycerate kinase family. As to quaternary structure, monomer.

It is found in the cytoplasm. The enzyme catalyses (2R)-3-phosphoglycerate + ATP = (2R)-3-phospho-glyceroyl phosphate + ADP. The protein operates within carbohydrate degradation; glycolysis; pyruvate from D-glyceraldehyde 3-phosphate: step 2/5. The protein is Phosphoglycerate kinase of Francisella philomiragia subsp. philomiragia (strain ATCC 25017 / CCUG 19701 / FSC 153 / O#319-036).